Reading from the N-terminus, the 438-residue chain is Protein SPMIP7 (438 aa).

In terms of tissue distribution, testis-specific.

Functionally, essential for normal spermatogenesis. This chain is Protein SPMIP7, found in Homo sapiens (Human).